A 518-amino-acid polypeptide reads, in one-letter code: Protein nucleotidyltransferase YdiU (518 aa).

Positions 109, 111, 112, 131, 143, 144, 194, and 201 each coordinate ATP. Asp-270 functions as the Proton acceptor in the catalytic mechanism. Positions 271 and 280 each coordinate Mg(2+). Asp-280 contacts ATP.

This sequence belongs to the SELO family. Requires Mg(2+) as cofactor. The cofactor is Mn(2+).

The catalysed reaction is L-seryl-[protein] + ATP = 3-O-(5'-adenylyl)-L-seryl-[protein] + diphosphate. It carries out the reaction L-threonyl-[protein] + ATP = 3-O-(5'-adenylyl)-L-threonyl-[protein] + diphosphate. It catalyses the reaction L-tyrosyl-[protein] + ATP = O-(5'-adenylyl)-L-tyrosyl-[protein] + diphosphate. The enzyme catalyses L-histidyl-[protein] + UTP = N(tele)-(5'-uridylyl)-L-histidyl-[protein] + diphosphate. The catalysed reaction is L-seryl-[protein] + UTP = O-(5'-uridylyl)-L-seryl-[protein] + diphosphate. It carries out the reaction L-tyrosyl-[protein] + UTP = O-(5'-uridylyl)-L-tyrosyl-[protein] + diphosphate. In terms of biological role, nucleotidyltransferase involved in the post-translational modification of proteins. It can catalyze the addition of adenosine monophosphate (AMP) or uridine monophosphate (UMP) to a protein, resulting in modifications known as AMPylation and UMPylation. The protein is Protein nucleotidyltransferase YdiU of Paraburkholderia xenovorans (strain LB400).